The chain runs to 130 residues: Methylglyoxal synthase (130 aa).

The MGS-like domain maps to 1-130 (MSKPRIALIA…DLARNMQDVC (130 aa)). Residues H11, K15, 37–40 (TGTT), and 57–58 (SG) contribute to the substrate site. The Proton donor/acceptor role is filled by D63. Substrate is bound at residue H90.

The protein belongs to the methylglyoxal synthase family.

It carries out the reaction dihydroxyacetone phosphate = methylglyoxal + phosphate. Functionally, catalyzes the formation of methylglyoxal from dihydroxyacetone phosphate. The polypeptide is Methylglyoxal synthase (Burkholderia ambifaria (strain MC40-6)).